The following is a 348-amino-acid chain: Protein RecA (348 aa).

ATP is bound at residue 66 to 73; sequence GPESSGKT.

It belongs to the RecA family.

The protein localises to the cytoplasm. Functionally, can catalyze the hydrolysis of ATP in the presence of single-stranded DNA, the ATP-dependent uptake of single-stranded DNA by duplex DNA, and the ATP-dependent hybridization of homologous single-stranded DNAs. It interacts with LexA causing its activation and leading to its autocatalytic cleavage. In Neisseria meningitidis serogroup B (strain ATCC BAA-335 / MC58), this protein is Protein RecA.